The chain runs to 172 residues: uncharacterized protein (172 aa).

This sequence belongs to the archaeal NMN adenylyltransferase family.

This is an uncharacterized protein from Aeropyrum pernix (strain ATCC 700893 / DSM 11879 / JCM 9820 / NBRC 100138 / K1).